Reading from the N-terminus, the 526-residue chain is tRNA-2-methylthio-N(6)-dimethylallyladenosine synthase (526 aa).

The MTTase N-terminal domain maps to 14-130 (RTYQVRTYGC…LPTLLERARH (117 aa)). Cysteine 23, cysteine 59, cysteine 93, cysteine 167, cysteine 171, and cysteine 174 together coordinate [4Fe-4S] cluster. Residues 153–401 (RESAYAGWVS…IELQERISLE (249 aa)) enclose the Radical SAM core domain. In terms of domain architecture, TRAM spans 404–483 (QAQVGRTLEL…PHHLIADGAL (80 aa)).

Belongs to the methylthiotransferase family. MiaB subfamily. In terms of assembly, monomer. The cofactor is [4Fe-4S] cluster.

It is found in the cytoplasm. The catalysed reaction is N(6)-dimethylallyladenosine(37) in tRNA + (sulfur carrier)-SH + AH2 + 2 S-adenosyl-L-methionine = 2-methylsulfanyl-N(6)-dimethylallyladenosine(37) in tRNA + (sulfur carrier)-H + 5'-deoxyadenosine + L-methionine + A + S-adenosyl-L-homocysteine + 2 H(+). In terms of biological role, catalyzes the methylthiolation of N6-(dimethylallyl)adenosine (i(6)A), leading to the formation of 2-methylthio-N6-(dimethylallyl)adenosine (ms(2)i(6)A) at position 37 in tRNAs that read codons beginning with uridine. The polypeptide is tRNA-2-methylthio-N(6)-dimethylallyladenosine synthase (Mycobacterium sp. (strain JLS)).